A 166-amino-acid polypeptide reads, in one-letter code: Phosphopantetheine adenylyltransferase (166 aa).

Residue Thr-9 participates in substrate binding. ATP is bound by residues 9–10 and His-17; that span reads TF. Residues Lys-41, Leu-73, and Arg-87 each coordinate substrate. ATP contacts are provided by residues 88–90, Glu-98, and 123–129; these read GLR and YQFISGT.

It belongs to the bacterial CoaD family. Homohexamer. Requires Mg(2+) as cofactor.

Its subcellular location is the cytoplasm. It catalyses the reaction (R)-4'-phosphopantetheine + ATP + H(+) = 3'-dephospho-CoA + diphosphate. The protein operates within cofactor biosynthesis; coenzyme A biosynthesis; CoA from (R)-pantothenate: step 4/5. Functionally, reversibly transfers an adenylyl group from ATP to 4'-phosphopantetheine, yielding dephospho-CoA (dPCoA) and pyrophosphate. The chain is Phosphopantetheine adenylyltransferase from Burkholderia mallei (strain NCTC 10229).